Reading from the N-terminus, the 446-residue chain is Ribosomal protein uS12 methylthiotransferase RimO (446 aa).

An MTTase N-terminal domain is found at 7-118; it reads PKIAFAHLGC…IVEVIERVER (112 aa). The [4Fe-4S] cluster site is built by Cys16, Cys52, Cys81, Cys156, Cys160, and Cys163. The region spanning 142–371 is the Radical SAM core domain; it reads TTPAPVAYLR…MELQQPIAQR (230 aa). The TRAM domain occupies 374 to 440; it reads AAEVGKIVPV…IYDLYGIIPA (67 aa).

It belongs to the methylthiotransferase family. RimO subfamily. The cofactor is [4Fe-4S] cluster.

Its subcellular location is the cytoplasm. It catalyses the reaction L-aspartate(89)-[ribosomal protein uS12]-hydrogen + (sulfur carrier)-SH + AH2 + 2 S-adenosyl-L-methionine = 3-methylsulfanyl-L-aspartate(89)-[ribosomal protein uS12]-hydrogen + (sulfur carrier)-H + 5'-deoxyadenosine + L-methionine + A + S-adenosyl-L-homocysteine + 2 H(+). Its function is as follows. Catalyzes the methylthiolation of an aspartic acid residue of ribosomal protein uS12. The chain is Ribosomal protein uS12 methylthiotransferase RimO from Thermosynechococcus vestitus (strain NIES-2133 / IAM M-273 / BP-1).